Reading from the N-terminus, the 147-residue chain is Hemoglobin subunit epsilon (147 aa).

Positions 3-147 (HFTAEEKAAI…VAIALGHKYH (145 aa)) constitute a Globin domain. Phosphoserine is present on residues serine 14 and serine 51. Heme b is bound by residues histidine 64 and histidine 93.

This sequence belongs to the globin family. Heterotetramer of two alpha chains and two epsilon chains in early embryonic hemoglobin Gower-2; two zeta chains and two epsilon chains in early embryonic hemoglobin Gower-1. In terms of tissue distribution, red blood cells.

In terms of biological role, the epsilon chain is a beta-type chain of early mammalian embryonic hemoglobin. The polypeptide is Hemoglobin subunit epsilon (HBE1) (Callithrix jacchus (White-tufted-ear marmoset)).